An 862-amino-acid polypeptide reads, in one-letter code: Eukaryotic translation initiation factor 3 subunit C (862 aa).

The segment at 1–81 is disordered; the sequence is MSSRFFYGGG…EEEEKVTVVK (81 aa). The span at 17-54 shows a compositional bias: acidic residues; it reads SSDEEELYSDREEEEKSEEEESSEEEDETSEEEESDEE. Residues 55 to 65 show a composition bias toward basic and acidic residues; that stretch reads TGAKKFLKDVA. Acidic residues predominate over residues 66 to 75; sequence SDSEEEEEEE. The PCI domain maps to 600 to 774; that stretch reads FHMHINLELL…NAIVFRKGVE (175 aa). The interval 813 to 862 is disordered; it reads RDQGAGARGGRGSGRGGQARGGPRFPGGQQGRRPGGQQFGGGALGGAIKA. Residues 818–862 are compositionally biased toward gly residues; that stretch reads GARGGRGSGRGGQARGGPRFPGGQQGRRPGGQQFGGGALGGAIKA.

Belongs to the eIF-3 subunit C family. As to quaternary structure, component of the eukaryotic translation initiation factor 3 (eIF-3) complex.

Its subcellular location is the cytoplasm. In terms of biological role, component of the eukaryotic translation initiation factor 3 (eIF-3) complex, which is involved in protein synthesis of a specialized repertoire of mRNAs and, together with other initiation factors, stimulates binding of mRNA and methionyl-tRNAi to the 40S ribosome. The eIF-3 complex specifically targets and initiates translation of a subset of mRNAs involved in cell proliferation. The chain is Eukaryotic translation initiation factor 3 subunit C (nip1) from Neosartorya fischeri (strain ATCC 1020 / DSM 3700 / CBS 544.65 / FGSC A1164 / JCM 1740 / NRRL 181 / WB 181) (Aspergillus fischerianus).